A 30-amino-acid chain; its full sequence is U-actitoxin-Bcg2a (30 aa).

A disulfide bridge links Cys7 with Cys27.

Its subcellular location is the secreted. It is found in the nematocyst. Its function is as follows. Possible voltage-gated potassium channel (Kv) blocker. In Bunodosoma cangicum (Sea anemone), this protein is U-actitoxin-Bcg2a.